A 217-amino-acid polypeptide reads, in one-letter code: Cytidylate kinase (217 aa).

9 to 17 (GPSSSGKSS) lines the ATP pocket.

Belongs to the cytidylate kinase family. Type 1 subfamily.

It is found in the cytoplasm. The catalysed reaction is CMP + ATP = CDP + ADP. The enzyme catalyses dCMP + ATP = dCDP + ADP. The polypeptide is Cytidylate kinase (Mycoplasma genitalium (strain ATCC 33530 / DSM 19775 / NCTC 10195 / G37) (Mycoplasmoides genitalium)).